The sequence spans 152 residues: Superoxide dismutase [Cu-Zn] (152 aa).

3 residues coordinate Cu cation: H45, H47, and H62. Residues C56 and C145 are joined by a disulfide bond. Zn(2+) contacts are provided by H62, H70, H79, and D82. H119 contributes to the Cu cation binding site.

The protein belongs to the Cu-Zn superoxide dismutase family. As to quaternary structure, homodimer. The cofactor is Cu cation. Requires Zn(2+) as cofactor.

It is found in the cytoplasm. It catalyses the reaction 2 superoxide + 2 H(+) = H2O2 + O2. Functionally, destroys radicals which are normally produced within the cells and which are toxic to biological systems. The sequence is that of Superoxide dismutase [Cu-Zn] (SODCC) from Panax ginseng (Korean ginseng).